The primary structure comprises 153 residues: Ribosome maturation factor RimP (153 aa).

The protein belongs to the RimP family.

The protein localises to the cytoplasm. In terms of biological role, required for maturation of 30S ribosomal subunits. This Histophilus somni (strain 2336) (Haemophilus somnus) protein is Ribosome maturation factor RimP.